Reading from the N-terminus, the 231-residue chain is MITMNYDPKIIERGKLYYRNNLVKYCIKYKNFLFGEVVGSDTYKVKVDLDNNYFGLCTCQYKYNCKHAYALIEAYENNNYVDAEEIFKEIEDKPKEEILKILKNLVVKYYLWDEFLNTDSLLNKAIGLIKLIPLERKNIYTFKSFLRNQFVKNADDEELIKVIDEMIRADLDFNNSDIIEALTIILDEIFRRENKEAIKKLINLYRKHKKELWIVGDYLIEYYDNYFDYED.

The SWIM-type zinc finger occupies 43 to 76 (YKVKVDLDNNYFGLCTCQYKYNCKHAYALIEAYE).

This is an uncharacterized protein from Methanocaldococcus jannaschii (strain ATCC 43067 / DSM 2661 / JAL-1 / JCM 10045 / NBRC 100440) (Methanococcus jannaschii).